The primary structure comprises 124 residues: Large ribosomal subunit protein bL12 (124 aa).

The segment covering 101–115 has biased composition (basic and acidic residues); it reads ALSKDDAEKAKKELE. The interval 101–124 is disordered; the sequence is ALSKDDAEKAKKELEEAGATVELK.

It belongs to the bacterial ribosomal protein bL12 family. Homodimer. Part of the ribosomal stalk of the 50S ribosomal subunit. Forms a multimeric L10(L12)X complex, where L10 forms an elongated spine to which 2 to 4 L12 dimers bind in a sequential fashion. Binds GTP-bound translation factors.

Functionally, forms part of the ribosomal stalk which helps the ribosome interact with GTP-bound translation factors. Is thus essential for accurate translation. This is Large ribosomal subunit protein bL12 from Hahella chejuensis (strain KCTC 2396).